A 1364-amino-acid chain; its full sequence is MSNSIEAKLQEDLRDALVDYYLGQIVPNSKDFTNLRSTIKNVDDLYDHLLLDTQVSAKVITSRLSLVTQSVQQYINRIALNLEPGLSINQQEATDWEEFANRYGYWAANQQLRMFPEIYVDPTLRLTKTEFFFQLESALNQGKLTDDVAQKAVLGYLNNFEEVSNLEIIAGYQDGIDIENDKTYFVARTRMQPYRYFWRSLDASQRNANSQELYPTAWSEWKAISVPLENVANGIVRPIMMDNRLYISWFEVAEEKETDSDGNIIVSGRYRTKIRLAHLGFDGVWSSGTTLREEVLADQMEEMIAVVDRMEDEPRLALVAFKEMSESWDVVFSYICDSMLIESSNLPTTTHPPKPGDGDKGLSDLDDYGANLVWFYLHETANGGKAEYKQLILYPVIINRDWPIELDKTHQGDFGTVDDFTLNSNYTGDELSLYLQSSSTYKYDFSKSKNIIYGIWKEDANNNRCWLNYKLLTPEDYEPQINATLVMCDKGDVNIITGFSLPNGGVDAGGKIKVTLRVGKKLRDKFQIKQFSQTQYLQFPEASSADVWYIGKQIRLNTLFAKELIGKASRSLDLVLSWETQNSRLEEAILGGAAELIDLDGANGIYFWELFFHMPFMVSWRFNVEQRYEDANRWVKYLFNPFECEDEPALLLGKPPYWNSRPLVDEPFKGYSLTQPSDPDAIAASDPIHYRKAVFNFLTKNIIDQGDMEYRKLQPSARTLARLSYSTASSLLGRRPDVQLTSFWQPLTLEDASYKTDSEIRAIEMQSQPLTFEPVVHDQTMSAVDNDIFMYPMNNELRGLWDRIENRIYNLRHNLTLDGKEINMDLYDSSISPRGLMKQRYQRVVTARNASKMNFKVPNYRFEPMLNRSKSGVETLIQFGSTLLSLLERKDSLSFDAYQMIQSGDLYRFSIDLQQQDIDINKASLEALQVSKQSAQDRYDHFKELYDENISSTEQKVIELQSQAANSLLMAQGMRTAAAALDVIPNIYGLAVGGSHWGAPLNAAAEIIMIKYQADSSKSESLSVSESYRRRRQEWELQYKQAEWEVNSVEQQINLQNMQIKAANKRLEQVEAQQQQAMALLDYFSERFTNESLYTWLISQLSSLYLQAYDAVLSLCLSAEASLLYELNLGEQSFVGGGGWNDLYQGLMAGETLKLALMRMERVYVEQNSRRQEITKTISLKALLGESWPAELNKLKQKTPINFNLEEQIFVEDYQELYQRRIKSVSVSLPMLVGPYEDVCAQLTQTSSSYSTRADLKTVENMLTKRTFADTPHLVRSIQPNQQISLSTGVNDSGLFMLNFDDERFLPFEGSGVDSSWRLQFTNLKQNLDSLNDVILHVKYTAAIGSSTFSQGVRKILANINNDE.

Residues 1025–1080 (SESYRRRRQEWELQYKQAEWEVNSVEQQINLQNMQIKAANKRLEQVEAQQQQAMAL) are a coiled coil.

In terms of assembly, semipurified toxin complex consists of at least YenA1-YenA2-YenB-YenC1-YenC2-Chi1-Chi2. The Yen-TC:K9 subcomplex is about 26 nm tall and 22 nm in diameter with 5-fold symmetry and 5 copies of YenA1, YenA2, Chi1 and Chi2; the chitinase subunits may be solvent accessible on the exterior the complex. The Yen-TC:K9 subcomplex has no insecticidal activity. The native complex with additional YenB, YenC1 and YenC2 subunits is 16 nm taller and is insecticidal; the toxicity-conferring subunits are present at about 1 copy each. Post-translationally, the isolated toxin complex includes 3 peptides starting between residues 768 and 778 of this protein, which might be physiologically relevant.

The protein resides in the secreted. Part of an orally active toxin complex (TC) with strong insecticidal effects on larvae of the Coleoptera Costelytra zealandica, Acrossidius tasmania and Adoryphorus couloni and some Lepidoptera larvae. The TC has an endochitinase activity. The sequence is that of Toxin subunit YenA2 from Yersinia entomophaga.